We begin with the raw amino-acid sequence, 453 residues long: Serine incorporator 1 (453 aa).

Gly-2 is lipidated: N-myristoyl glycine. At 2–39 (GSVLGLCSMASWIPCLCGSAPCLLCRCCPSGNNSTVTR) the chain is on the cytoplasmic side. A helical transmembrane segment spans residues 40 to 60 (LIYALFLLVGVCVACVMLIPG). Topologically, residues 61–88 (MEEQLNKIPGFCENEKGMVPCNILVGYK) are lumenal. The helical transmembrane segment at 89–109 (AVYRLCFGLAMFYLLLSLLMI) threads the bilayer. At 110–123 (KVKSSSDPRAAIHN) the chain is on the cytoplasmic side. A helical transmembrane segment spans residues 124–144 (GFWFFKFAAAIAIIIGAFFIP). Topologically, residues 145–151 (EGTFTTV) are lumenal. The chain crosses the membrane as a helical span at residues 152–172 (WFYVGMAGAFCFILIQLVLLI). Residues 173–197 (DFAHSWNESWVEKMEEGNSRCWYAA) are Cytoplasmic-facing. A helical transmembrane segment spans residues 198–218 (LLSATALNYLLSLVAVVLFFV). Residues 219–231 (YYTHPASCAENKA) are Lumenal-facing. The chain crosses the membrane as a helical span at residues 232-252 (FISVNMLLCLGASIMSILPKI). The Cytoplasmic portion of the chain corresponds to 253-259 (QESQPRS). Residues 260–280 (GLLQSSVITVYTMYLTWSAMT) form a helical membrane-spanning segment. The Lumenal segment spans residues 281–309 (NEPETECNPSLLNIIGYNTTSTVSKEGQS). A helical membrane pass occupies residues 310–330 (VQWWHTQGIIGLILFLLCVFY). Topologically, residues 331–387 (SSIRTSNNSQVNKLTLTSDESTLIEDGGARNDGSLEDGDDVHRAVDNERDGVTYSYS) are cytoplasmic. Position 351 is a phosphoserine (Ser-351). Thr-352 carries the phosphothreonine modification. A Phosphoserine modification is found at Ser-364. Residues 388–408 (FFHFMLFLASLYIMMTLTNWY) form a helical membrane-spanning segment. At 409-426 (RYEPSREMKSQWTAVWVK) the chain is on the lumenal side. A helical transmembrane segment spans residues 427–447 (ISSSWIGIVLYVWTLVAPLVL). Residues 448–453 (TNRDFD) lie on the Cytoplasmic side of the membrane.

It belongs to the TDE1 family. Interacts with SPTLC1.

It is found in the endoplasmic reticulum membrane. Functionally, enhances the incorporation of serine into phosphatidylserine and sphingolipids. The protein is Serine incorporator 1 (SERINC1) of Bos taurus (Bovine).